The primary structure comprises 294 residues: Large ribosomal subunit protein uL4m (294 aa).

Residues 120–139 (VRGGGRKPWQQKGSGRARHG) are disordered. The residue at position 147 (Arg147) is an Omega-N-methylarginine.

This sequence belongs to the universal ribosomal protein uL4 family. As to quaternary structure, component of the mitochondrial ribosome large subunit (39S) which comprises a 16S rRNA and about 50 distinct proteins. Interacts with MIEF1 upstream open reading frame protein.

Its subcellular location is the mitochondrion. The protein is Large ribosomal subunit protein uL4m (MRPL4) of Bos taurus (Bovine).